Here is a 577-residue protein sequence, read N- to C-terminus: Urease subunit alpha (577 aa).

The Urease domain occupies 136 to 577 (GAIDCHVHLI…LPMAQRYFLF (442 aa)). The Ni(2+) site is built by His141, His143, and Lys224. Position 224 is an N6-carboxylysine (Lys224). His226 lines the substrate pocket. Residues His253 and His279 each coordinate Ni(2+). His327 serves as the catalytic Proton donor. Ni(2+) is bound at residue Asp367.

It belongs to the metallo-dependent hydrolases superfamily. Urease alpha subunit family. As to quaternary structure, heterotrimer of UreA (gamma), UreB (beta) and UreC (alpha) subunits. Three heterotrimers associate to form the active enzyme. It depends on Ni cation as a cofactor. In terms of processing, carboxylation allows a single lysine to coordinate two nickel ions.

The protein localises to the cytoplasm. It carries out the reaction urea + 2 H2O + H(+) = hydrogencarbonate + 2 NH4(+). It functions in the pathway nitrogen metabolism; urea degradation; CO(2) and NH(3) from urea (urease route): step 1/1. The sequence is that of Urease subunit alpha from Mycobacterium ulcerans (strain Agy99).